Consider the following 77-residue polypeptide: Large ribosomal subunit protein bL28 (77 aa).

It belongs to the bacterial ribosomal protein bL28 family.

In Verminephrobacter eiseniae (strain EF01-2), this protein is Large ribosomal subunit protein bL28.